The sequence spans 405 residues: Argininosuccinate synthase (405 aa).

ATP contacts are provided by residues 10-18 (AYSGGLDTS) and Ala-37. Tyr-88 and Ser-93 together coordinate L-citrulline. ATP is bound at residue Gly-118. 3 residues coordinate L-aspartate: Thr-120, Asn-124, and Asp-125. Residue Asn-124 participates in L-citrulline binding. L-citrulline contacts are provided by Arg-128, Ser-179, Ser-188, Glu-264, and Tyr-276.

The protein belongs to the argininosuccinate synthase family. Type 1 subfamily. Homotetramer.

It is found in the cytoplasm. It carries out the reaction L-citrulline + L-aspartate + ATP = 2-(N(omega)-L-arginino)succinate + AMP + diphosphate + H(+). It functions in the pathway amino-acid biosynthesis; L-arginine biosynthesis; L-arginine from L-ornithine and carbamoyl phosphate: step 2/3. The polypeptide is Argininosuccinate synthase (Pseudomonas fluorescens (strain SBW25)).